The primary structure comprises 250 residues: Non-specific acid phosphatase (250 aa).

Positions 1 to 20 are cleaved as a signal peptide; the sequence is MKSRYLLFFLPLIVAKYTSA.

This sequence belongs to the class A bacterial acid phosphatase family. Homodimer.

The protein resides in the periplasm. The catalysed reaction is a phosphate monoester + H2O = an alcohol + phosphate. The sequence is that of Non-specific acid phosphatase (phoN) from Salmonella typhi.